A 291-amino-acid chain; its full sequence is Nucleotide-binding protein Athe_0320 (291 aa).

9-16 is a binding site for ATP; sequence GMSGAGKS. Residue 60–63 coordinates GTP; sequence DIRG.

The protein belongs to the RapZ-like family.

In terms of biological role, displays ATPase and GTPase activities. In Caldicellulosiruptor bescii (strain ATCC BAA-1888 / DSM 6725 / KCTC 15123 / Z-1320) (Anaerocellum thermophilum), this protein is Nucleotide-binding protein Athe_0320.